Here is a 401-residue protein sequence, read N- to C-terminus: Phosphoglycerate kinase (401 aa).

Residues 24-26, R40, 63-66, R122, and R155 each bind substrate; these read DFN and HFGR. Residues K206, G297, E328, and 357-360 contribute to the ATP site; that span reads GGDS.

This sequence belongs to the phosphoglycerate kinase family. Monomer.

Its subcellular location is the cytoplasm. It carries out the reaction (2R)-3-phosphoglycerate + ATP = (2R)-3-phospho-glyceroyl phosphate + ADP. It functions in the pathway carbohydrate degradation; glycolysis; pyruvate from D-glyceraldehyde 3-phosphate: step 2/5. The protein is Phosphoglycerate kinase of Prochlorococcus marinus (strain NATL2A).